A 244-amino-acid polypeptide reads, in one-letter code: tRNA (guanine-N(1)-)-methyltransferase (244 aa).

Residues Gly113 and 133 to 138 each bind S-adenosyl-L-methionine; that span reads IGDYVL.

This sequence belongs to the RNA methyltransferase TrmD family. As to quaternary structure, homodimer.

The protein localises to the cytoplasm. The catalysed reaction is guanosine(37) in tRNA + S-adenosyl-L-methionine = N(1)-methylguanosine(37) in tRNA + S-adenosyl-L-homocysteine + H(+). Specifically methylates guanosine-37 in various tRNAs. The protein is tRNA (guanine-N(1)-)-methyltransferase of Bacillus cereus (strain B4264).